The sequence spans 406 residues: Acetyltransferase sirH (406 aa).

The next 6 membrane-spanning stretches (helical) occupy residues 9–29, 32–52, 63–83, 295–315, 323–343, and 358–378; these read IFIE…FALG, AHTF…CQSL, LLSN…WILL, VQLF…ALLC, SALF…HVIA, and FIGF…WVGS.

This sequence belongs to the wax synthase family.

The protein localises to the membrane. The protein operates within mycotoxin biosynthesis. Acetyltransferase; part of the gene cluster that mediates the biosynthesis of sirodesmin PL, an epipolythiodioxopiperazine (ETP) characterized by a disulfide bridged cyclic dipeptide and that acts as a phytotoxin which is involved in the blackleg didease of canola. SirD catalyzes the O-prenylation of L-tyrosine (L-Tyr) in the presence of dimethylallyl diphosphate (DMAPP) to yield 4-O-dimethylallyl-L-Tyr, and therefore represents probably the first pathway-specific enzyme in the biosynthesis of sirodesmin PL. 4-O-dimethylallyl-L-Tyr, then undergoes condensation with L-Ser in a reaction catalyzed by the non-ribosomal peptide synthase sirP to form the diketopiperazine (DKP) backbone. Further bishydroxylation of the DKP performed by the cytochrome P450 monooxygenase sirC leads to the production of the intermediate phomamide. This step is essential to form the reactive thiol group required for toxicity of sirodesmin PL. The next steps of sirodesmin biosynthesis are not well understood yet, but some predictions could be made from intermediate compounds identification. Phomamide is converted into phomalizarine via oxidation, probably by sirT. Further oxidation, methylation (by sirM or sirN) and reduction steps convert phomalizarine to deacetyl sirodesmin. Finally, acetyltransferase sirH probably acetylates deacetyl sirodesmin to produce sirodesmin PL. The protein is Acetyltransferase sirH of Leptosphaeria maculans (Blackleg fungus).